The sequence spans 819 residues: Pentatricopeptide repeat-containing protein At1g52620 (819 aa).

18 PPR repeats span residues 98 to 132 (NGFACSSFLKLLARYRIFNEIEDVLGNLRNENVKL), 133 to 163 (THEALSHVLHAYAESGSLSKAVEIYDYVVEL), 169 to 203 (DVIACNSLLSLLVKSRRLGDARKVYDEMCDRGDSV), 204 to 238 (DNYSTCILVKGMCNEGKVEVGRKLIEGRWGKGCIP), 239 to 273 (NIVFYNTIIGGYCKLGDIENAYLVFKELKLKGFMP), 274 to 308 (TLETFGTMINGFCKEGDFVASDRLLSEVKERGLRV), 309 to 343 (SVWFLNNIIDAKYRHGYKVDPAESIGWIIANDCKP), 344 to 378 (DVATYNILINRLCKEGKKEVAVGFLDEASKKGLIP), 379 to 413 (NNLSYAPLIQAYCKSKEYDIASKLLLQMAERGCKP), 414 to 448 (DIVTYGILIHGLVVSGHMDDAVNMKVKLIDRGVSP), 449 to 483 (DAAIYNMLMSGLCKTGRFLPAKLLFSEMLDRNILP), 484 to 518 (DAYVYATLIDGFIRSGDFDEARKVFSLSVEKGVKV), 519 to 553 (DVVHHNAMIKGFCRSGMLDEALACMNRMNEEHLVP), 554 to 588 (DKFTYSTIIDGYVKQQDMATAIKIFRYMEKNKCKP), 589 to 623 (NVVTYTSLINGFCCQGDFKMAEETFKEMQLRDLVP), 624 to 659 (NVVTYTTLIRSLAKESSTLEKAVYYWELMMTNKCVP), 709 to 743 (HAAAYNSALVCLCVHGMVKTACMFQDKMVKKGFSP), and 744 to 779 (DPVSFAAILHGFCVVGNSKQWRNMDFCNLGEKGLEV).

Belongs to the PPR family. P subfamily.

This is Pentatricopeptide repeat-containing protein At1g52620 from Arabidopsis thaliana (Mouse-ear cress).